The following is a 100-amino-acid chain: Small ribosomal subunit protein uS14c (100 aa).

The protein belongs to the universal ribosomal protein uS14 family. Part of the 30S ribosomal subunit.

It is found in the plastid. Its subcellular location is the chloroplast. Its function is as follows. Binds 16S rRNA, required for the assembly of 30S particles. In Phaeodactylum tricornutum (strain CCAP 1055/1), this protein is Small ribosomal subunit protein uS14c.